Here is a 247-residue protein sequence, read N- to C-terminus: UPF0280 protein Mevan_0550 (247 aa).

The protein belongs to the UPF0280 family.

This chain is UPF0280 protein Mevan_0550, found in Methanococcus vannielii (strain ATCC 35089 / DSM 1224 / JCM 13029 / OCM 148 / SB).